The primary structure comprises 96 residues: Neutrophil defensin 8 (96 aa).

Residues 1–19 form the signal peptide; the sequence is MRTLVILAAILLVALQAQA. The propeptide occupies 20–66; that stretch reads EPLQARTDEATAAQEQIPTDNPEVVVSLAWDESLAPKDSVPGLRKNM. 3 disulfides stabilise this stretch: Cys68–Cys96, Cys70–Cys85, and Cys75–Cys95.

This sequence belongs to the alpha-defensin family.

It localises to the secreted. Probable antibiotic and antifungal activity. The protein is Neutrophil defensin 8 of Macaca mulatta (Rhesus macaque).